A 177-amino-acid polypeptide reads, in one-letter code: Large ribosomal subunit protein uL6 (177 aa).

It belongs to the universal ribosomal protein uL6 family. In terms of assembly, part of the 50S ribosomal subunit.

Its function is as follows. This protein binds to the 23S rRNA, and is important in its secondary structure. It is located near the subunit interface in the base of the L7/L12 stalk, and near the tRNA binding site of the peptidyltransferase center. The sequence is that of Large ribosomal subunit protein uL6 from Bordetella pertussis (strain Tohama I / ATCC BAA-589 / NCTC 13251).